We begin with the raw amino-acid sequence, 453 residues long: Pup--protein ligase (453 aa).

Residue Glu9 participates in Mg(2+) binding. Residue Arg53 coordinates ATP. Tyr55 contributes to the Mg(2+) binding site. Asp57 acts as the Proton acceptor in catalysis. Glu63 lines the Mg(2+) pocket. 2 residues coordinate ATP: Thr66 and Trp420.

It belongs to the Pup ligase/Pup deamidase family. Pup-conjugating enzyme subfamily.

The enzyme catalyses ATP + [prokaryotic ubiquitin-like protein]-L-glutamate + [protein]-L-lysine = ADP + phosphate + N(6)-([prokaryotic ubiquitin-like protein]-gamma-L-glutamyl)-[protein]-L-lysine.. It participates in protein degradation; proteasomal Pup-dependent pathway. The protein operates within protein modification; protein pupylation. Catalyzes the covalent attachment of the prokaryotic ubiquitin-like protein modifier Pup to the proteasomal substrate proteins, thereby targeting them for proteasomal degradation. This tagging system is termed pupylation. The ligation reaction involves the side-chain carboxylate of the C-terminal glutamate of Pup and the side-chain amino group of a substrate lysine. The polypeptide is Pup--protein ligase (Kineococcus radiotolerans (strain ATCC BAA-149 / DSM 14245 / SRS30216)).